The chain runs to 192 residues: Ribose 1,5-bisphosphate phosphokinase PhnN (192 aa).

Belongs to the ribose 1,5-bisphosphokinase family.

It catalyses the reaction alpha-D-ribose 1,5-bisphosphate + ATP = 5-phospho-alpha-D-ribose 1-diphosphate + ADP. The protein operates within metabolic intermediate biosynthesis; 5-phospho-alpha-D-ribose 1-diphosphate biosynthesis; 5-phospho-alpha-D-ribose 1-diphosphate from D-ribose 5-phosphate (route II): step 3/3. Catalyzes the phosphorylation of ribose 1,5-bisphosphate to 5-phospho-D-ribosyl alpha-1-diphosphate (PRPP). This chain is Ribose 1,5-bisphosphate phosphokinase PhnN, found in Achromobacter xylosoxidans (strain A8).